Here is a 302-residue protein sequence, read N- to C-terminus: tRNA dimethylallyltransferase (302 aa).

9-16 provides a ligand contact to ATP; sequence GATATGKS. Position 11-16 (11-16) interacts with substrate; the sequence is TATGKS. An interaction with substrate tRNA region spans residues 34–37; the sequence is DSRQ.

This sequence belongs to the IPP transferase family. Monomer. The cofactor is Mg(2+).

The catalysed reaction is adenosine(37) in tRNA + dimethylallyl diphosphate = N(6)-dimethylallyladenosine(37) in tRNA + diphosphate. Catalyzes the transfer of a dimethylallyl group onto the adenine at position 37 in tRNAs that read codons beginning with uridine, leading to the formation of N6-(dimethylallyl)adenosine (i(6)A). This Nostoc punctiforme (strain ATCC 29133 / PCC 73102) protein is tRNA dimethylallyltransferase.